The sequence spans 95 residues: Small ribosomal subunit protein bS20 (95 aa).

The interval 1-22 is disordered; the sequence is MANIKSQIKRNRTNENNRLRNK. A compositionally biased stretch (basic and acidic residues) spans 12–22; that stretch reads RTNENNRLRNK.

Belongs to the bacterial ribosomal protein bS20 family.

Its function is as follows. Binds directly to 16S ribosomal RNA. The polypeptide is Small ribosomal subunit protein bS20 (Tropheryma whipplei (strain TW08/27) (Whipple's bacillus)).